Here is a 71-residue protein sequence, read N- to C-terminus: Permeability factor 2 (71 aa).

Disulfide bonds link Cys-7/Cys-33 and Cys-9/Cys-49.

The protein belongs to the intercrine alpha (chemokine CxC) family. As to quaternary structure, homodimer.

It localises to the secreted. Its function is as follows. Has chemotactic activity for neutrophils. The protein is Permeability factor 2 of Oryctolagus cuniculus (Rabbit).